The primary structure comprises 408 residues: LL-diaminopimelate aminotransferase (408 aa).

Substrate-binding residues include Tyr-15 and Gly-42. Residues Tyr-72, 108 to 109 (SK), Tyr-132, Asn-187, Tyr-218, and 246 to 248 (SFS) contribute to the pyridoxal 5'-phosphate site. Residues Lys-109, Tyr-132, and Asn-187 each contribute to the substrate site. Lys-249 is modified (N6-(pyridoxal phosphate)lysine). Pyridoxal 5'-phosphate is bound by residues Arg-257 and Asn-292. Substrate contacts are provided by Asn-292 and Arg-388.

The protein belongs to the class-I pyridoxal-phosphate-dependent aminotransferase family. LL-diaminopimelate aminotransferase subfamily. As to quaternary structure, homodimer. Requires pyridoxal 5'-phosphate as cofactor.

It carries out the reaction (2S,6S)-2,6-diaminopimelate + 2-oxoglutarate = (S)-2,3,4,5-tetrahydrodipicolinate + L-glutamate + H2O + H(+). Its pathway is amino-acid biosynthesis; L-lysine biosynthesis via DAP pathway; LL-2,6-diaminopimelate from (S)-tetrahydrodipicolinate (aminotransferase route): step 1/1. Functionally, involved in the synthesis of meso-diaminopimelate (m-DAP or DL-DAP), required for both lysine and peptidoglycan biosynthesis. Catalyzes the direct conversion of tetrahydrodipicolinate to LL-diaminopimelate. In Parasynechococcus marenigrum (strain WH8102), this protein is LL-diaminopimelate aminotransferase.